Consider the following 246-residue polypeptide: UDP-N-acetyl-D-mannosaminuronic acid transferase (246 aa).

It belongs to the glycosyltransferase 26 family.

It catalyses the reaction UDP-N-acetyl-alpha-D-mannosaminouronate + N-acetyl-alpha-D-glucosaminyl-di-trans,octa-cis-undecaprenyl diphosphate = beta-D-ManNAcA-(1-&gt;4)-alpha-D-GlcNAc-di-trans,octa-cis-undecaprenyl diphosphate + UDP + H(+). The protein operates within bacterial outer membrane biogenesis; enterobacterial common antigen biosynthesis. In terms of biological role, catalyzes the synthesis of Und-PP-GlcNAc-ManNAcA (Lipid II), the second lipid-linked intermediate involved in enterobacterial common antigen (ECA) synthesis. This is UDP-N-acetyl-D-mannosaminuronic acid transferase from Salmonella paratyphi A (strain ATCC 9150 / SARB42).